We begin with the raw amino-acid sequence, 517 residues long: Protein BTN1 (517 aa).

Helical transmembrane passes span 24 to 44, 57 to 77, 88 to 108, 112 to 132, 146 to 166, 169 to 189, 371 to 391, and 409 to 429; these read LFAA…IILS, GVVA…WPLL, VGFC…SSSL, LLGI…FLQL, LGAW…IWWL, GLGV…FPIT, PAII…TFFF, and SITI…SGYV.

The protein belongs to the battenin family.

The protein resides in the vacuole membrane. Involved in vacuolar transport and vacuole pH homeostasis. Also required for cytokinesis. This Cryptococcus neoformans var. neoformans serotype D (strain B-3501A) (Filobasidiella neoformans) protein is Protein BTN1 (BTN1).